A 955-amino-acid polypeptide reads, in one-letter code: Calsyntenin-2 (955 aa).

An N-terminal signal peptide occupies residues 1–20 (MLPGRLCWVPLLLALGVGSG). Residues 21 to 831 (SGGGGDSRQR…SIQHSSVVPS (811 aa)) are Extracellular-facing. Cadherin domains are found at residues 44–160 (IETS…APTF) and 161–280 (KEPA…MPLF). N-linked (GlcNAc...) asparagine glycosylation is found at Asn-56 and Asn-98. N-linked (GlcNAc...) asparagine glycosylation is found at Asn-342, Asn-374, Asn-716, and Asn-729. Residues 832–852 (IATVVIIISVCMLVFVVAMGV) form a helical membrane-spanning segment. Residues 853–955 (YRVRIAHQHF…LEWDDSTLPY (103 aa)) lie on the Cytoplasmic side of the membrane. The segment at 887–955 (PMEKHEGPGH…LEWDDSTLPY (69 aa)) is disordered. Residues 888 to 898 (MEKHEGPGHGE) show a composition bias toward basic and acidic residues. 2 stretches are compositionally biased toward acidic residues: residues 899 to 913 (DETE…EEEM) and 920 to 929 (DDSEEEEEEE).

This sequence belongs to the calsyntenin family. Post-translationally, proteolytically processed under normal cellular conditions. A primary zeta-cleavage generates a large extracellular (soluble) N-terminal domain (sAlc) and a short C-terminal transmembrane fragment (CTF1). A secondary cleavage catalyzed by gamma-secretase within the transmembrane domain releases the beta-Alc-gamma chain in the extracellular milieu and produces an intracellular fragment (AlcICD). This processing is strongly suppressed in the tripartite complex formed with APBA2 and APP, which seems to prevent the association with PSEN1. Restricted to the brain.

The protein resides in the postsynaptic cell membrane. Its subcellular location is the endoplasmic reticulum membrane. It localises to the golgi apparatus membrane. The protein localises to the cell projection. It is found in the dendrite. In terms of biological role, postsynaptic adhesion molecule that binds to presynaptic neurexins to mediate synapse formation, and which is involved in learning and memory. Promotes synapse development by acting as a cell adhesion molecule at the postsynaptic membrane, which associates with neurexin-alpha at the presynaptic membrane. This Homo sapiens (Human) protein is Calsyntenin-2.